The following is a 380-amino-acid chain: Cytochrome b (380 aa).

A run of 4 helical transmembrane segments spans residues 34–54, 78–99, 114–134, and 179–199; these read FGSLLGICLVTQILTGLLLAM, WLIRNLHANGASLFFICIYLHI, WNTGVILLLTLMATAFVGYVL, and FFALHFLLPFMIAGLTLIHLT. Heme b is bound by residues His-84 and His-98. Residues His-183 and His-197 each coordinate heme b. Position 202 (His-202) interacts with a ubiquinone. 4 helical membrane-spanning segments follow: residues 227–247, 289–309, 321–341, and 348–368; these read LKDFLGFALMLFLLTALALFT, LGGVLALAASVLVLLLVPFLH, LSQTLFWILVSNLFILTWIGS, and FITIGQLASITYFTIILILFP.

It belongs to the cytochrome b family. In terms of assembly, the cytochrome bc1 complex contains 11 subunits: 3 respiratory subunits (MT-CYB, CYC1 and UQCRFS1), 2 core proteins (UQCRC1 and UQCRC2) and 6 low-molecular weight proteins (UQCRH/QCR6, UQCRB/QCR7, UQCRQ/QCR8, UQCR10/QCR9, UQCR11/QCR10 and a cleavage product of UQCRFS1). This cytochrome bc1 complex then forms a dimer. It depends on heme b as a cofactor.

It is found in the mitochondrion inner membrane. Component of the ubiquinol-cytochrome c reductase complex (complex III or cytochrome b-c1 complex) that is part of the mitochondrial respiratory chain. The b-c1 complex mediates electron transfer from ubiquinol to cytochrome c. Contributes to the generation of a proton gradient across the mitochondrial membrane that is then used for ATP synthesis. This chain is Cytochrome b (MT-CYB), found in Coracias caudatus (Lilac-breasted roller).